Consider the following 545-residue polypeptide: Chaperonin GroEL (545 aa).

Residues 31–34, 88–92, Gly-415, 478–480, and Asp-494 contribute to the ATP site; these read TLGP, DGTTT, and NAA.

The protein belongs to the chaperonin (HSP60) family. Forms a cylinder of 14 subunits composed of two heptameric rings stacked back-to-back. Interacts with the co-chaperonin GroES.

The protein localises to the cytoplasm. It carries out the reaction ATP + H2O + a folded polypeptide = ADP + phosphate + an unfolded polypeptide.. Its function is as follows. Together with its co-chaperonin GroES, plays an essential role in assisting protein folding. The GroEL-GroES system forms a nano-cage that allows encapsulation of the non-native substrate proteins and provides a physical environment optimized to promote and accelerate protein folding. The sequence is that of Chaperonin GroEL from Streptococcus pyogenes serotype M4 (strain MGAS10750).